The following is a 372-amino-acid chain: Septin-1 (372 aa).

One can recognise a Septin-type G domain in the interval 27 to 301 (KGFDFTLMVA…EGYRARCLQS (275 aa)). The interval 37–44 (GESGLGKS) is G1 motif. GTP contacts are provided by residues 37–44 (GESGLGKS), Thr71, Gly97, and 176–184 (KADALMPQE). Residues 94-97 (DTPG) are G3 motif. Residues 175–178 (GKAD) form a G4 motif region. Ser211 is subject to Phosphoserine. The GTP site is built by Gly234 and Arg250. A Phosphoserine; by AURKB modification is found at Ser253. The residue at position 256 (Thr256) is a Phosphothreonine. Residues Ser312 and Ser320 each carry the phosphoserine; by AURKB modification. The interval 352–372 (LEKMQAQMQQSQAQGEQSDAL) is disordered. Low complexity predominate over residues 355–372 (MQAQMQQSQAQGEQSDAL).

Belongs to the TRAFAC class TrmE-Era-EngA-EngB-Septin-like GTPase superfamily. Septin GTPase family. As to quaternary structure, septins polymerize into heterooligomeric protein complexes that form filaments, and can associate with cellular membranes, actin filaments and microtubules. GTPase activity is required for filament formation. Interacts with AURKB. Expressed at high levels in lymphoid and hematopoietic tissues.

The protein resides in the cytoplasm. The protein localises to the cytoskeleton. It is found in the microtubule organizing center. It localises to the centrosome. Its subcellular location is the midbody. In terms of biological role, filament-forming cytoskeletal GTPase. May play a role in cytokinesis (Potential). In Homo sapiens (Human), this protein is Septin-1.